Reading from the N-terminus, the 339-residue chain is DNA-directed RNA polymerase subunit alpha (339 aa).

The tract at residues 1–233 is alpha N-terminal domain (alpha-NTD); sequence MVREEVAGST…DLFLPFLHAE (233 aa). Positions 266–339 are alpha C-terminal domain (alpha-CTD); that stretch reads GIPLNCIFID…IDLLKNKLSF (74 aa).

It belongs to the RNA polymerase alpha chain family. In terms of assembly, in plastids the minimal PEP RNA polymerase catalytic core is composed of four subunits: alpha, beta, beta', and beta''. When a (nuclear-encoded) sigma factor is associated with the core the holoenzyme is formed, which can initiate transcription.

It is found in the plastid. Its subcellular location is the chloroplast. It catalyses the reaction RNA(n) + a ribonucleoside 5'-triphosphate = RNA(n+1) + diphosphate. Functionally, DNA-dependent RNA polymerase catalyzes the transcription of DNA into RNA using the four ribonucleoside triphosphates as substrates. The sequence is that of DNA-directed RNA polymerase subunit alpha from Elymus canadensis (Canada wild rye).